A 774-amino-acid polypeptide reads, in one-letter code: 5-methyltetrahydropteroyltriglutamate--homocysteine methyltransferase (774 aa).

5-methyltetrahydropteroyltri-L-glutamate-binding positions include 23–26 and Lys123; that span reads RELK. Residues 446–448 and Glu499 each bind L-homocysteine; that span reads IGS. Residues 446–448 and Glu499 each bind L-methionine; that span reads IGS. 5-methyltetrahydropteroyltri-L-glutamate-binding positions include 530 to 531 and Trp576; that span reads RC. An L-homocysteine-binding site is contributed by Asp614. Asp614 serves as a coordination point for L-methionine. 5-methyltetrahydropteroyltri-L-glutamate is bound at residue Glu620. Zn(2+)-binding residues include His656, Cys658, and Glu680. His709 (proton donor) is an active-site residue. Position 741 (Cys741) interacts with Zn(2+).

It belongs to the vitamin-B12 independent methionine synthase family. The cofactor is Zn(2+).

The enzyme catalyses 5-methyltetrahydropteroyltri-L-glutamate + L-homocysteine = tetrahydropteroyltri-L-glutamate + L-methionine. It participates in amino-acid biosynthesis; L-methionine biosynthesis via de novo pathway; L-methionine from L-homocysteine (MetE route): step 1/1. Its function is as follows. Catalyzes the transfer of a methyl group from 5-methyltetrahydrofolate to homocysteine resulting in methionine formation. The polypeptide is 5-methyltetrahydropteroyltriglutamate--homocysteine methyltransferase (Aliivibrio fischeri (strain ATCC 700601 / ES114) (Vibrio fischeri)).